The primary structure comprises 339 residues: Ketol-acid reductoisomerase (NADP(+)) (339 aa).

The KARI N-terminal Rossmann domain maps to 1-182 (MRVYYDRDAD…GGGRAGIIET (182 aa)). Residues 24–27 (YGSQ), arginine 48, serine 51, threonine 53, and 83–86 (DELQ) each bind NADP(+). Histidine 108 is an active-site residue. Residue glycine 134 participates in NADP(+) binding. The 146-residue stretch at 183-328 (SFKEECETDL…AKLRDMMPWI (146 aa)) folds into the KARI C-terminal knotted domain. 4 residues coordinate Mg(2+): aspartate 191, glutamate 195, glutamate 227, and glutamate 231. Serine 252 contacts substrate.

This sequence belongs to the ketol-acid reductoisomerase family. Requires Mg(2+) as cofactor.

The catalysed reaction is (2R)-2,3-dihydroxy-3-methylbutanoate + NADP(+) = (2S)-2-acetolactate + NADPH + H(+). The enzyme catalyses (2R,3R)-2,3-dihydroxy-3-methylpentanoate + NADP(+) = (S)-2-ethyl-2-hydroxy-3-oxobutanoate + NADPH + H(+). It functions in the pathway amino-acid biosynthesis; L-isoleucine biosynthesis; L-isoleucine from 2-oxobutanoate: step 2/4. It participates in amino-acid biosynthesis; L-valine biosynthesis; L-valine from pyruvate: step 2/4. Involved in the biosynthesis of branched-chain amino acids (BCAA). Catalyzes an alkyl-migration followed by a ketol-acid reduction of (S)-2-acetolactate (S2AL) to yield (R)-2,3-dihydroxy-isovalerate. In the isomerase reaction, S2AL is rearranged via a Mg-dependent methyl migration to produce 3-hydroxy-3-methyl-2-ketobutyrate (HMKB). In the reductase reaction, this 2-ketoacid undergoes a metal-dependent reduction by NADPH to yield (R)-2,3-dihydroxy-isovalerate. This is Ketol-acid reductoisomerase (NADP(+)) from Rhodopseudomonas palustris (strain HaA2).